Consider the following 528-residue polypeptide: MANQDFLNEINKRRTFAIISHPDAGKTTITEKVLLFGNALQKAGTVKGKKSGQHAKSDWMEMEKDRGISITTSVMQFPYGGALVNLLDTPGHEDFSEDTYRTLTAVDSCLMVIDSAKGVEDRTIKLMEVTRLRDTPIVTFMNKLDRDIRDPIDLMDEVENVLNIACAPITWPIGSGKEFKGVYHILRDEVVLYQSGMGHTIQERRVIEGINNPDLDKAIGSYAADLRDEMELVRGASNEFDHAAFLKGELTPVFFGTALGNFGVDHILDGIVEWAPKPLPRESDTRVIMPDEEKFTGFVFKIQANMDPKHRDRVAFMRVCSGRYEQGMKMHHVRIGKDVNVSDALTFMAGDRERAEEAYPGDIIGLHNHGTIRIGDTFTQGEKFRFTGVPNFAPEMFRRIRLRDPLKQKQLLKGLVQLSEEGAVQVFRPLDTNDLIVGAVGVLQFEVVVGRLKSEYNVEAIYEGISVSTARWVYCKDERKLEEFRRKCSQNLALDGGDNLTYIAPTMVNLNLSMERYPDIEFAKTREH.

One can recognise a tr-type G domain in the interval 11–279 (NKRRTFAIIS…GIVEWAPKPL (269 aa)). Residues 20–27 (SHPDAGKT), 88–92 (DTPGH), and 142–145 (NKLD) contribute to the GTP site.

The protein belongs to the TRAFAC class translation factor GTPase superfamily. Classic translation factor GTPase family. PrfC subfamily.

It is found in the cytoplasm. Increases the formation of ribosomal termination complexes and stimulates activities of RF-1 and RF-2. It binds guanine nucleotides and has strong preference for UGA stop codons. It may interact directly with the ribosome. The stimulation of RF-1 and RF-2 is significantly reduced by GTP and GDP, but not by GMP. This is Peptide chain release factor 3 from Shewanella sp. (strain W3-18-1).